The chain runs to 175 residues: Phosphatidylglycerol/phosphatidylinositol transfer protein (175 aa).

The signal sequence occupies residues 1–21 (MKFLSTAAALLVCLAPVSTTA). Residues 22–37 (RSLDFFKSSQSPIQAQ) constitute a propeptide that is removed on maturation.

Belongs to the NPC2 family. Monomer.

Its subcellular location is the cytoplasm. It is found in the cytoplasmic vesicle. It localises to the golgi apparatus. Catalyzes the intermembrane transfer of phosphatidylglycerol and phosphatidylinositol. This is Phosphatidylglycerol/phosphatidylinositol transfer protein (pltp) from Aspergillus oryzae (strain ATCC 42149 / RIB 40) (Yellow koji mold).